Consider the following 88-residue polypeptide: UPF0250 protein Sbal_3280 (88 aa).

The protein belongs to the UPF0250 family.

In Shewanella baltica (strain OS155 / ATCC BAA-1091), this protein is UPF0250 protein Sbal_3280.